A 261-amino-acid chain; its full sequence is MEENDHSNRDVERQDSGDESNRAILPLLQAPGNVLPHRITNFYIDNILRPDFGRRKEGSRRDEINIVERENRCPSAPGSGQVAPVSGEGTSSPRAVNASKKTDISTDESLKSRAETGDQCLSSDSDCSQRCAAQAKQPMLWPAWVYCTRYSDRPSSGPRSRKPKKKTPTKEDKRPRTAFTAEQLQRLKNEFQNNRYLTEQRRQALAQELGLNESQIKIWFQNKRAKIKKATGNKNTLAVHLMAQGLYNHATVTKDDKSDSD.

3 stretches are compositionally biased toward basic and acidic residues: residues 1-21 (MEEN…DESN), 53-72 (GRRK…RENR), and 100-116 (KKTD…RAET). Disordered regions lie at residues 1-24 (MEEN…NRAI), 53-125 (GRRK…SSDS), and 152-176 (DRPS…KRPR). The segment at residues 172–231 (DKRPRTAFTAEQLQRLKNEFQNNRYLTEQRRQALAQELGLNESQIKIWFQNKRAKIKKAT) is a DNA-binding region (homeobox).

Belongs to the engrailed homeobox family.

The protein resides in the nucleus. The sequence is that of Homeobox protein engrailed-2b (eng2b) from Danio rerio (Zebrafish).